The primary structure comprises 762 residues: Primary amine oxidase, lung isozyme (762 aa).

The signal sequence occupies residues 1–16; that stretch reads MFIFIFLSLWTLLVMG. The tract at residues 23-54 is disordered; it reads GSEEGVGKQCHPSLPPRCPSRSPSDQPWTHPD. N-linked (GlcNAc...) asparagine glycosylation is present at asparagine 136. Cysteine 197 and cysteine 198 are disulfide-bonded. Threonine 211 carries O-linked (GalNAc...) threonine glycosylation. N-linked (GlcNAc...) asparagine glycans are attached at residues asparagine 231 and asparagine 293. 383–393 is a substrate binding site; the sequence is YMDACFGMGKF. Aspartate 385 serves as the catalytic Proton acceptor. The cysteines at positions 403 and 429 are disulfide-linked. 467–472 is a binding site for substrate; sequence LLNYDY. Tyrosine 470 serves as the catalytic Schiff-base intermediate with substrate; via topaquinone. Tyrosine 470 is subject to 2',4',5'-topaquinone. Cu cation is bound by residues histidine 519 and histidine 521. Positions 528, 529, 530, and 571 each coordinate Ca(2+). 577 to 584 is a heparin binding site; it reads PLGGGSPR. N-linked (GlcNAc...) asparagine glycosylation is present at asparagine 617. Positions 662 and 664 each coordinate Ca(2+). Residue asparagine 665 is glycosylated (N-linked (GlcNAc...) asparagine). Ca(2+) is bound by residues glutamate 666, aspartate 672, and leucine 673. Histidine 683 serves as a coordination point for Cu cation. The cysteines at positions 733 and 740 are disulfide-linked.

This sequence belongs to the copper/topaquinone oxidase family. In terms of assembly, homodimer; disulfide-linked. It depends on Cu cation as a cofactor. Ca(2+) serves as cofactor. The cofactor is L-topaquinone. In terms of processing, topaquinone (TPQ) is generated by copper-dependent autoxidation of a specific tyrosyl residue. Expressed in lung, spleen, heart and kidney.

The protein resides in the secreted. The protein localises to the extracellular space. It catalyses the reaction a primary methyl amine + O2 + H2O = an aldehyde + H2O2 + NH4(+). In Bos taurus (Bovine), this protein is Primary amine oxidase, lung isozyme.